Here is a 507-residue protein sequence, read N- to C-terminus: ATP synthase subunit alpha (507 aa).

The tract at residues 118 to 141 (VDGLGPIETTETRPIESPAPGVMD) is disordered. 172–179 (GDRQTGKT) serves as a coordination point for ATP.

This sequence belongs to the ATPase alpha/beta chains family. In terms of assembly, F-type ATPases have 2 components, CF(1) - the catalytic core - and CF(0) - the membrane proton channel. CF(1) has five subunits: alpha(3), beta(3), gamma(1), delta(1), epsilon(1). CF(0) has three main subunits: a(1), b(2) and c(9-12). The alpha and beta chains form an alternating ring which encloses part of the gamma chain. CF(1) is attached to CF(0) by a central stalk formed by the gamma and epsilon chains, while a peripheral stalk is formed by the delta and b chains.

It is found in the cell membrane. The enzyme catalyses ATP + H2O + 4 H(+)(in) = ADP + phosphate + 5 H(+)(out). Produces ATP from ADP in the presence of a proton gradient across the membrane. The alpha chain is a regulatory subunit. In Anoxybacillus flavithermus (strain DSM 21510 / WK1), this protein is ATP synthase subunit alpha.